The primary structure comprises 399 residues: Phosphoglycerate kinase (399 aa).

Substrate contacts are provided by residues Asp-22–Asn-24, Arg-38, His-61–Arg-64, Arg-120, and Arg-153. ATP-binding positions include Lys-204, Glu-326, and Gly-352–Thr-355.

This sequence belongs to the phosphoglycerate kinase family. As to quaternary structure, monomer.

Its subcellular location is the cytoplasm. It carries out the reaction (2R)-3-phosphoglycerate + ATP = (2R)-3-phospho-glyceroyl phosphate + ADP. It functions in the pathway carbohydrate degradation; glycolysis; pyruvate from D-glyceraldehyde 3-phosphate: step 2/5. This Geobacter sp. (strain M21) protein is Phosphoglycerate kinase.